The chain runs to 104 residues: NADH-quinone oxidoreductase subunit K (104 aa).

A run of 3 helical transmembrane segments spans residues 4–24 (VPAS…LFGA), 31–51 (VIVL…FVAF), and 67–87 (LFTM…LIAL).

Belongs to the complex I subunit 4L family. NDH-1 is composed of 14 different subunits. Subunits NuoA, H, J, K, L, M, N constitute the membrane sector of the complex.

The protein localises to the cell membrane. The catalysed reaction is a quinone + NADH + 5 H(+)(in) = a quinol + NAD(+) + 4 H(+)(out). In terms of biological role, NDH-1 shuttles electrons from NADH, via FMN and iron-sulfur (Fe-S) centers, to quinones in the respiratory chain. The immediate electron acceptor for the enzyme in this species is believed to be a menaquinone. Couples the redox reaction to proton translocation (for every two electrons transferred, four hydrogen ions are translocated across the cytoplasmic membrane), and thus conserves the redox energy in a proton gradient. In Bacillus anthracis (strain A0248), this protein is NADH-quinone oxidoreductase subunit K.